A 315-amino-acid polypeptide reads, in one-letter code: Small ribosomal subunit biogenesis GTPase RsgA (315 aa).

Residues 82–246 enclose the CP-type G domain; the sequence is DQFKSKVLAA…LIDSPGFQEF (165 aa). GTP-binding positions include 130–133 and 184–192; these read NKID and GQSGMGKSS. Zn(2+)-binding residues include C270, C275, H277, and C283.

It belongs to the TRAFAC class YlqF/YawG GTPase family. RsgA subfamily. In terms of assembly, monomer. Associates with 30S ribosomal subunit, binds 16S rRNA. Zn(2+) serves as cofactor.

The protein resides in the cytoplasm. In terms of biological role, one of several proteins that assist in the late maturation steps of the functional core of the 30S ribosomal subunit. Helps release RbfA from mature subunits. May play a role in the assembly of ribosomal proteins into the subunit. Circularly permuted GTPase that catalyzes slow GTP hydrolysis, GTPase activity is stimulated by the 30S ribosomal subunit. The protein is Small ribosomal subunit biogenesis GTPase RsgA of Ralstonia pickettii (strain 12J).